The following is a 193-amino-acid chain: Large ribosomal subunit protein uL18 (193 aa).

This sequence belongs to the universal ribosomal protein uL18 family. As to quaternary structure, part of the 50S ribosomal subunit. Contacts the 5S and 23S rRNAs.

This is one of the proteins that bind and probably mediate the attachment of the 5S RNA into the large ribosomal subunit, where it forms part of the central protuberance. The sequence is that of Large ribosomal subunit protein uL18 from Methanococcus maripaludis (strain DSM 14266 / JCM 13030 / NBRC 101832 / S2 / LL).